The chain runs to 264 residues: Glutamate racemase (264 aa).

Substrate is bound by residues 9-10 and 41-42; these read DS and YG. Cys-72 functions as the Proton donor/acceptor in the catalytic mechanism. A substrate-binding site is contributed by 73–74; it reads NT. Cys-183 (proton donor/acceptor) is an active-site residue. Substrate is bound at residue 184–185; that stretch reads TH.

The protein belongs to the aspartate/glutamate racemases family.

It catalyses the reaction L-glutamate = D-glutamate. The protein operates within cell wall biogenesis; peptidoglycan biosynthesis. In terms of biological role, provides the (R)-glutamate required for cell wall biosynthesis. The chain is Glutamate racemase from Geobacillus kaustophilus (strain HTA426).